Consider the following 194-residue polypeptide: Peptidyl-tRNA hydrolase (194 aa).

Tyr21 provides a ligand contact to tRNA. His26 functions as the Proton acceptor in the catalytic mechanism. TRNA-binding residues include Tyr72, Asn74, and Asn120.

Belongs to the PTH family. In terms of assembly, monomer.

The protein localises to the cytoplasm. It carries out the reaction an N-acyl-L-alpha-aminoacyl-tRNA + H2O = an N-acyl-L-amino acid + a tRNA + H(+). In terms of biological role, hydrolyzes ribosome-free peptidyl-tRNAs (with 1 or more amino acids incorporated), which drop off the ribosome during protein synthesis, or as a result of ribosome stalling. Catalyzes the release of premature peptidyl moieties from peptidyl-tRNA molecules trapped in stalled 50S ribosomal subunits, and thus maintains levels of free tRNAs and 50S ribosomes. This chain is Peptidyl-tRNA hydrolase, found in Halorhodospira halophila (strain DSM 244 / SL1) (Ectothiorhodospira halophila (strain DSM 244 / SL1)).